The following is a 198-amino-acid chain: Nucleoid occlusion factor SlmA (198 aa).

One can recognise an HTH tetR-type domain in the interval 9 to 70 (RNRREEILQA…SLIEFIEDSL (62 aa)). The H-T-H motif DNA-binding region spans 33–52 (TTAKLAANVGVSEAALYRHF). Positions 113 to 144 (ALMFEQDRLQDRINQLFERIESQLRQVLREHK) form a coiled coil.

This sequence belongs to the nucleoid occlusion factor SlmA family. Homodimer. Interacts with FtsZ.

It is found in the cytoplasm. Its subcellular location is the nucleoid. Its function is as follows. Required for nucleoid occlusion (NO) phenomenon, which prevents Z-ring formation and cell division over the nucleoid. Acts as a DNA-associated cell division inhibitor that binds simultaneously chromosomal DNA and FtsZ, and disrupts the assembly of FtsZ polymers. SlmA-DNA-binding sequences (SBS) are dispersed on non-Ter regions of the chromosome, preventing FtsZ polymerization at these regions. The polypeptide is Nucleoid occlusion factor SlmA (Pectobacterium carotovorum subsp. carotovorum (strain PC1)).